The following is a 275-amino-acid chain: Large ribosomal subunit protein uL2 (275 aa).

Residues 224-275 are disordered; that stretch reads AMNPVDHPHGGGEAKAGQGNPHPVTPWGVPTKGYKTRKNKRTQQFIVRDRRG.

Belongs to the universal ribosomal protein uL2 family. As to quaternary structure, part of the 50S ribosomal subunit. Forms a bridge to the 30S subunit in the 70S ribosome.

In terms of biological role, one of the primary rRNA binding proteins. Required for association of the 30S and 50S subunits to form the 70S ribosome, for tRNA binding and peptide bond formation. It has been suggested to have peptidyltransferase activity; this is somewhat controversial. Makes several contacts with the 16S rRNA in the 70S ribosome. This is Large ribosomal subunit protein uL2 from Xanthomonas axonopodis pv. citri (strain 306).